Here is a 333-residue protein sequence, read N- to C-terminus: B3 domain-containing protein At1g32030 (333 aa).

Polar residues-rich tracts occupy residues 76–99 (VTVR…SLLD) and 134–143 (PQNASSSSTL). A disordered region spans residues 76-179 (VTVRNPEQNQ…SEPKKAKTPY (104 aa)). Residues 220-328 (QSRLLMPFNT…ILSFALVLPP (109 aa)) constitute a DNA-binding region (TF-B3).

The protein resides in the nucleus. This Arabidopsis thaliana (Mouse-ear cress) protein is B3 domain-containing protein At1g32030.